The chain runs to 128 residues: MEQTFIAIKPDGVQRGLCGEVMKFIQPMKHYLDLKDMPFYAGLCKYMSSGPVFAMVWEGEGIVKMMLGETNPADSKPGSIRGDFCINIGRNIIHGSDTVENAKMEVGLWFKPEEFVAYAEKAKAWVYE.

Methionine 1 is subject to N-acetylmethionine. ATP is bound by residues lysine 9, phenylalanine 39, threonine 70, arginine 81, and asparagine 91. Catalysis depends on histidine 94, which acts as the Pros-phosphohistidine intermediate.

Belongs to the NDK family. It depends on Mg(2+) as a cofactor.

Its subcellular location is the cytoplasm. The protein localises to the nucleus. The protein resides in the cell projection. It localises to the lamellipodium. It is found in the ruffle. It carries out the reaction a 2'-deoxyribonucleoside 5'-diphosphate + ATP = a 2'-deoxyribonucleoside 5'-triphosphate + ADP. The enzyme catalyses a ribonucleoside 5'-diphosphate + ATP = a ribonucleoside 5'-triphosphate + ADP. In terms of biological role, major role in the synthesis of nucleoside triphosphates other than ATP. The polypeptide is Nucleoside diphosphate kinase B (nme2) (Merluccius bilinearis (Silver hake)).